The sequence spans 800 residues: Phenylalanine--tRNA ligase beta subunit (800 aa).

A tRNA-binding domain is found at 39-154; the sequence is TKDIKNLVVG…EAQVPGTDAL (116 aa). The 76-residue stretch at 408–483 folds into the B5 domain; it reads AFITPIDITA…RIYGYDDIPS (76 aa). Mg(2+) contacts are provided by D461, D467, E470, and E471. An FDX-ACB domain is found at 708 to 800; it reads PRFPGMSRDI…ALIEQGAVIR (93 aa).

Belongs to the phenylalanyl-tRNA synthetase beta subunit family. Type 1 subfamily. As to quaternary structure, tetramer of two alpha and two beta subunits. It depends on Mg(2+) as a cofactor.

The protein localises to the cytoplasm. It carries out the reaction tRNA(Phe) + L-phenylalanine + ATP = L-phenylalanyl-tRNA(Phe) + AMP + diphosphate + H(+). The sequence is that of Phenylalanine--tRNA ligase beta subunit from Staphylococcus aureus (strain USA300).